We begin with the raw amino-acid sequence, 421 residues long: Gamma-glutamyl phosphate reductase (421 aa).

Belongs to the gamma-glutamyl phosphate reductase family.

The protein localises to the cytoplasm. It carries out the reaction L-glutamate 5-semialdehyde + phosphate + NADP(+) = L-glutamyl 5-phosphate + NADPH + H(+). Its pathway is amino-acid biosynthesis; L-proline biosynthesis; L-glutamate 5-semialdehyde from L-glutamate: step 2/2. Catalyzes the NADPH-dependent reduction of L-glutamate 5-phosphate into L-glutamate 5-semialdehyde and phosphate. The product spontaneously undergoes cyclization to form 1-pyrroline-5-carboxylate. The chain is Gamma-glutamyl phosphate reductase from Nitrosospira multiformis (strain ATCC 25196 / NCIMB 11849 / C 71).